A 140-amino-acid polypeptide reads, in one-letter code: Large ribosomal subunit protein uL16 (140 aa).

Over residues M1 to K14 the composition is skewed to basic residues. The interval M1 to T20 is disordered.

Belongs to the universal ribosomal protein uL16 family. Part of the 50S ribosomal subunit.

Its function is as follows. Binds 23S rRNA and is also seen to make contacts with the A and possibly P site tRNAs. The protein is Large ribosomal subunit protein uL16 of Geotalea daltonii (strain DSM 22248 / JCM 15807 / FRC-32) (Geobacter daltonii).